A 252-amino-acid polypeptide reads, in one-letter code: Ribosomal RNA small subunit methyltransferase J (252 aa).

S-adenosyl-L-methionine-binding positions include 101 to 102 (RD), 117 to 118 (ER), 153 to 154 (SS), and Asp-171.

This sequence belongs to the methyltransferase superfamily. RsmJ family.

The protein localises to the cytoplasm. It catalyses the reaction guanosine(1516) in 16S rRNA + S-adenosyl-L-methionine = N(2)-methylguanosine(1516) in 16S rRNA + S-adenosyl-L-homocysteine + H(+). Functionally, specifically methylates the guanosine in position 1516 of 16S rRNA. The protein is Ribosomal RNA small subunit methyltransferase J of Salmonella dublin (strain CT_02021853).